Consider the following 376-residue polypeptide: 4-hydroxy-3-methylbut-2-en-1-yl diphosphate synthase (flavodoxin) (376 aa).

[4Fe-4S] cluster contacts are provided by Cys270, Cys273, Cys305, and Glu312.

The protein belongs to the IspG family. It depends on [4Fe-4S] cluster as a cofactor.

It catalyses the reaction (2E)-4-hydroxy-3-methylbut-2-enyl diphosphate + oxidized [flavodoxin] + H2O + 2 H(+) = 2-C-methyl-D-erythritol 2,4-cyclic diphosphate + reduced [flavodoxin]. The protein operates within isoprenoid biosynthesis; isopentenyl diphosphate biosynthesis via DXP pathway; isopentenyl diphosphate from 1-deoxy-D-xylulose 5-phosphate: step 5/6. In terms of biological role, converts 2C-methyl-D-erythritol 2,4-cyclodiphosphate (ME-2,4cPP) into 1-hydroxy-2-methyl-2-(E)-butenyl 4-diphosphate. The polypeptide is 4-hydroxy-3-methylbut-2-en-1-yl diphosphate synthase (flavodoxin) (Colwellia psychrerythraea (strain 34H / ATCC BAA-681) (Vibrio psychroerythus)).